Consider the following 123-residue polypeptide: Small ribosomal subunit protein uS12cz/uS12cy (123 aa).

This sequence belongs to the universal ribosomal protein uS12 family. Part of the 30S ribosomal subunit.

The protein localises to the plastid. The protein resides in the chloroplast. With S4 and S5 plays an important role in translational accuracy. Located at the interface of the 30S and 50S subunits. This Eucalyptus globulus subsp. globulus (Tasmanian blue gum) protein is Small ribosomal subunit protein uS12cz/uS12cy (rps12-A).